The chain runs to 151 residues: Ribonuclease H (151 aa).

The RNase H type-1 domain occupies 1 to 141; the sequence is MKHVDIFTDG…ADELARKGME (141 aa). Mg(2+)-binding residues include Asp9, Glu47, Asp69, and Asp133.

Belongs to the RNase H family. Monomer. Mg(2+) is required as a cofactor.

It localises to the cytoplasm. The catalysed reaction is Endonucleolytic cleavage to 5'-phosphomonoester.. Functionally, endonuclease that specifically degrades the RNA of RNA-DNA hybrids. The protein is Ribonuclease H of Rhizobium johnstonii (strain DSM 114642 / LMG 32736 / 3841) (Rhizobium leguminosarum bv. viciae).